A 486-amino-acid polypeptide reads, in one-letter code: Hematopoietic lineage cell-specific protein (486 aa).

The tract at residues 27–66 (FVNDISEKEQRWGAKTIEGSGRTEHINIHQLRNKVSEEHD) is involved in HAX-1 binding. Lysine 41 is subject to N6-acetyllysine. 3 Cortactin repeats span residues 79–115 (ASHG…SQTD), 116–152 (AARG…SQKD), and 153–189 (YSHG…SQRD). An N6-acetyllysine modification is found at lysine 123. Position 140 is a phosphotyrosine (tyrosine 140). The stretch at 190–212 (YAKGFGGQYGIQKDRVDKSAVGF) is one Cortactin 4; truncated repeat. Lysine 192 bears the N6-acetyllysine mark. A Phosphotyrosine modification is found at tyrosine 198. Tyrosine 222 is subject to Phosphotyrosine; by FGR. The interval 226 to 430 (TPIEAASSGA…AGPSAGAGGA (205 aa)) is disordered. Composition is skewed to basic and acidic residues over residues 240–258 (AKFE…EEKA) and 265–276 (QQERKAVVKMSR). At lysine 241 the chain carries N6-acetyllysine. Serine 275 carries the phosphoserine modification. Residue threonine 330 is modified to Phosphothreonine. Serine 333 is modified (phosphoserine). The span at 358-367 (VVEEPVYEAA) shows a compositional bias: low complexity. The segment covering 368-413 (PELEPEPEPDYEPEPETEPDYEDVGELDRQDEDAEGDYEDVLEPED) has biased composition (acidic residues). Phosphotyrosine; by SYK and FES occurs at positions 388 and 405. The SH3 domain maps to 429–486 (GAGISAIALYDYQGEGSDELSFDPDDIITDIEMVDEGWWRGQCRGHFGLFPANYVKLL).

As to quaternary structure, interacts (via SH2 domain) with FGR. Associates with the SH2 and SH3 domains of LCK. Binding to he LCK SH3 domain occurs constitutively, while binding to the LCK SH2 domain occurs only upon TCR stimulation. A similar binding pattern was observed with LYN, but not with FYN in which the FYN SH2 region associates upon TCR stimulation but the FYN SH3 region does not associate regardless of TCR stimulation. Directly associates with HAX1, through binding to its C-terminal region. Interacts with HS1BP3. Interacts with FES/FPS. Forms a multiprotein complex with LYN and ANKRD54. Phosphorylated by LYN, FYN and FGR after cross-linking of surface IgM on B-cells. Phosphorylation by LYN, FYN and FGR requires prior phosphorylation by SYK. Binds to LCK in vivo, and is tyrosine phosphorylated upon TCR stimulation. Phosphorylated by FES. As to expression, expressed only in tissues and cells of hematopoietic origin.

The protein localises to the mitochondrion. Functionally, substrate of the antigen receptor-coupled tyrosine kinase. Plays a role in antigen receptor signaling for both clonal expansion and deletion in lymphoid cells. May also be involved in the regulation of gene expression. The polypeptide is Hematopoietic lineage cell-specific protein (Hcls1) (Mus musculus (Mouse)).